The following is a 641-amino-acid chain: ATP-dependent DNA helicase PIF1 (641 aa).

A PINT region spans residues 1–180 (MLSGIEAAAG…LVKRPVEPQA (180 aa)). Phosphoserine occurs at positions 27 and 151. The tract at residues 167-641 (PDTTLVKRPV…SDQENMDPIL (475 aa)) is hydrolyzes ATP in the presence of both magnesium and single-stranded DNA; weak activity in the presence of RNA or double-stranded DNA; No unwinding activity. Residues 173 to 192 (KRPVEPQAGAEPSTEAPRWP) are disordered. An ATP-binding site is contributed by 228–235 (GSAGTGKS). The DNA-binding element occupies 577 to 596 (QAYVALSRARSLQGLRVLDF). The segment at 622-641 (LESPDDDEAASDQENMDPIL) is disordered. Positions 624–641 (SPDDDEAASDQENMDPIL) are enriched in acidic residues.

This sequence belongs to the helicase family. PIF1 subfamily. In terms of assembly, monomer. Interacts with telomerase. It depends on Mg(2+) as a cofactor. In terms of tissue distribution, weak ubiquitous expression.

The protein localises to the nucleus. Its subcellular location is the mitochondrion. It catalyses the reaction Couples ATP hydrolysis with the unwinding of duplex DNA at the replication fork by translocating in the 5'-3' direction. This creates two antiparallel DNA single strands (ssDNA). The leading ssDNA polymer is the template for DNA polymerase III holoenzyme which synthesizes a continuous strand.. The enzyme catalyses ATP + H2O = ADP + phosphate + H(+). Functionally, DNA-dependent ATPase and 5'-3' DNA helicase required for the maintenance of both mitochondrial and nuclear genome stability. Efficiently unwinds G-quadruplex (G4) DNA structures and forked RNA-DNA hybrids. Resolves G4 structures, preventing replication pausing and double-strand breaks (DSBs) at G4 motifs. Involved in the maintenance of telomeric DNA. Inhibits telomere elongation, de novo telomere formation and telomere addition to DSBs via catalytic inhibition of telomerase. Reduces the processivity of telomerase by displacing active telomerase from DNA ends. Releases telomerase by unwinding the short telomerase RNA/telomeric DNA hybrid that is the intermediate in the telomerase reaction. Possesses an intrinsic strand annealing activity. The sequence is that of ATP-dependent DNA helicase PIF1 from Homo sapiens (Human).